The primary structure comprises 2210 residues: Mediator of RNA polymerase II transcription subunit 13-like (2210 aa).

Over residues 391-400 the composition is skewed to polar residues; the sequence is SKRSQMSTPT. Disordered stretches follow at residues 391–414, 435–489, and 519–582; these read SKRS…TWDF, AVGP…PFHH, and VSSS…NPAL. Positions 445–458 are enriched in low complexity; that stretch reads SQPGFSAGPSSSSS. Residues 468–480 are compositionally biased toward basic and acidic residues; the sequence is KTAERQEKGDKLQ. A compositionally biased stretch (polar residues) spans 533–544; it reads SRNTSKQMNLNP. Over residues 551-560 the composition is skewed to pro residues; the sequence is PISPLPPTLS. Residues serine 553 and serine 560 each carry the phosphoserine modification. Positions 669-673 match the LXXLL motif 1 motif; it reads LQRLL. Residues 736 to 752 show a composition bias toward basic and acidic residues; it reads GTEKDSLKKNKSEDGFG. Positions 736–770 are disordered; the sequence is GTEKDSLKKNKSEDGFGTKDVTTPGHSTPVPDGKN. 3 positions are modified to phosphoserine: serine 817, serine 826, and serine 923. Residues 1016–1096 are disordered; that stretch reads PQMNTPVTLN…STTRPLNSVE (81 aa). Positions 1025-1036 are enriched in low complexity; sequence NSAAPASNSGAG. Over residues 1077–1092 the composition is skewed to polar residues; the sequence is TDQGSPASTPSTTRPL. Residues 1225-1229 carry the LXXLL motif 2 motif; it reads LLLLL. The interval 1380 to 1401 is leucine-zipper; sequence LPIPTLLVGYDKDFLTISPFSL. Disordered stretches follow at residues 1530–1656 and 2045–2080; these read QTPP…VTER and GNLH…QGER. The span at 1531–1608 shows a compositional bias: low complexity; the sequence is TPPAAAQGQA…ISTTSSSGFS (78 aa). Residues 1615 to 1629 show a composition bias toward polar residues; that stretch reads NPSTGGISADRTQGN. The span at 1637 to 1650 shows a compositional bias: low complexity; sequence DPGQSSSQPSQDGQ. Serine 2083 is subject to Phosphoserine.

Belongs to the Mediator complex subunit 13 family. In terms of assembly, component of the Mediator complex, which is composed of MED1, MED4, MED6, MED7, MED8, MED9, MED10, MED11, MED12, MED13, MED13L, MED14, MED15, MED16, MED17, MED18, MED19, MED20, MED21, MED22, MED23, MED24, MED25, MED26, MED27, MED29, MED30, MED31, CCNC, CDK8 and CDC2L6/CDK11. The MED12, MED13, CCNC and CDK8 subunits form a distinct module termed the CDK8 module. Mediator containing the CDK8 module is less active than Mediator lacking this module in supporting transcriptional activation. Individual preparations of the Mediator complex lacking one or more distinct subunits have been variously termed ARC, CRSP, DRIP, PC2, SMCC and TRAP. Highly expressed in brain (cerebellum), heart (aorta), skeletal muscle, kidney, placenta and peripheral blood leukocytes. Highly expressed in fetal brain.

It is found in the nucleus. Its function is as follows. Component of the Mediator complex, a coactivator involved in the regulated transcription of nearly all RNA polymerase II-dependent genes. Mediator functions as a bridge to convey information from gene-specific regulatory proteins to the basal RNA polymerase II transcription machinery. Mediator is recruited to promoters by direct interactions with regulatory proteins and serves as a scaffold for the assembly of a functional preinitiation complex with RNA polymerase II and the general transcription factors. This subunit may specifically regulate transcription of targets of the Wnt signaling pathway and SHH signaling pathway. This Homo sapiens (Human) protein is Mediator of RNA polymerase II transcription subunit 13-like (MED13L).